A 150-amino-acid polypeptide reads, in one-letter code: Ribosomal RNA large subunit methyltransferase H (150 aa).

Residues Leu-71, Gly-100, and 118–123 (FSQMTF) each bind S-adenosyl-L-methionine.

It belongs to the RNA methyltransferase RlmH family. Homodimer.

It is found in the cytoplasm. It carries out the reaction pseudouridine(1915) in 23S rRNA + S-adenosyl-L-methionine = N(3)-methylpseudouridine(1915) in 23S rRNA + S-adenosyl-L-homocysteine + H(+). Its function is as follows. Specifically methylates the pseudouridine at position 1915 (m3Psi1915) in 23S rRNA. The polypeptide is Ribosomal RNA large subunit methyltransferase H (Mycoplasmopsis agalactiae (strain NCTC 10123 / CIP 59.7 / PG2) (Mycoplasma agalactiae)).